A 350-amino-acid polypeptide reads, in one-letter code: MKLKTMTMEWTGDSLILIDQRRLPFEEVYVTCADYRAVALSIKEMVVRGAPAIGATAAFGYVLGAKEILKKSHNYEQVVMQMKNVKETLAKTRPTAVNLFWALERMEKRLIRHGKYEGLVKVLEDEALKIAKEDIEVNKAIGRNGAQLLQDGFTVLTHCNAGALATVDYGTALGVLRAAKEQGKKIKVYADETRPYLQGARLTAWELMKDGFDVTLISDNMAGWVMKQGKINAVIVGADRIAANGDVANKIGTYMVAVLANRHGIPFYVAAPLSTIDMSIKSGKEIPIEERSHEEVLTCGGKRVAPNNVNVYNPAFDVTDHELVTAIITEKGVVYPPYEENIKKLFEEGI.

Substrate-binding positions include arginine 48 to alanine 50, arginine 93, and glutamine 198. Aspartate 239 serves as the catalytic Proton donor. Position 249 to 250 (asparagine 249 to lysine 250) interacts with substrate.

It belongs to the eIF-2B alpha/beta/delta subunits family. MtnA subfamily.

It catalyses the reaction 5-(methylsulfanyl)-alpha-D-ribose 1-phosphate = 5-(methylsulfanyl)-D-ribulose 1-phosphate. The protein operates within amino-acid biosynthesis; L-methionine biosynthesis via salvage pathway; L-methionine from S-methyl-5-thio-alpha-D-ribose 1-phosphate: step 1/6. Its function is as follows. Catalyzes the interconversion of methylthioribose-1-phosphate (MTR-1-P) into methylthioribulose-1-phosphate (MTRu-1-P). The sequence is that of Methylthioribose-1-phosphate isomerase from Fervidobacterium nodosum (strain ATCC 35602 / DSM 5306 / Rt17-B1).